The sequence spans 508 residues: Bestrophin-2 (508 aa).

Residues 1–31 lie on the Cytoplasmic side of the membrane; sequence MTVTYTARVANARFGGFSQLLLLWRGSIYKL. Ca(2+) is bound at residue Ala10. The chain crosses the membrane as a helical span at residues 32-51; that stretch reads LWRELLCFLGLYMALSAAYR. At 52-60 the chain is on the extracellular side; sequence FLLAEEQKR. A helical membrane pass occupies residues 61-82; it reads YFEKLVIYCDQYASLIPVSFVL. The Cytoplasmic segment spans residues 83–238; sequence GFYVTLVVHR…WISIPLVYTQ (156 aa). The chain crosses the membrane as a helical span at residues 239–255; the sequence is VVTIAVYSYFLACLIGR. The Extracellular portion of the chain corresponds to 256–274; it reads QFLDPAQGYKDHTLDLCVP. A helical transmembrane segment spans residues 275–288; sequence IFTLLQFFFYAGWL. The Cytoplasmic portion of the chain corresponds to 289-508; the sequence is KVAEQLINPF…PIGEEEESPA (220 aa). Gln293, Asn296, Asp301, and Asp304 together coordinate Ca(2+). The tract at residues 455–508 is disordered; it reads LREPELEPPACPEPPAPIPGPTPEPFTTVSIPGPRAPAPPWLPSPIGEEEESPA. Composition is skewed to pro residues over residues 461 to 478 and 488 to 497; these read EPPA…PTPE and PRAPAPPWLP.

Belongs to the anion channel-forming bestrophin (TC 1.A.46) family. Calcium-sensitive chloride channel subfamily. As to quaternary structure, pentamer. Interacts with GLUL; this interaction tethers a fraction of GLUL to the membrane, causing a decrease of cytosolic glutamine synthase (GS) activity and inhibits the chloride channel activity of BEST2 by affecting the gating at the aperture in the absence of intracellular glutamate. As to expression, expressed in mucin-secreting colonic goblet cells.

The protein resides in the cell membrane. It is found in the basolateral cell membrane. The enzyme catalyses chloride(in) = chloride(out). It catalyses the reaction hydrogencarbonate(in) = hydrogencarbonate(out). The catalysed reaction is L-glutamate(out) = L-glutamate(in). It carries out the reaction iodide(out) = iodide(in). The enzyme catalyses L-glutamine(out) = L-glutamine(in). Chloride channel activity is allosterically inhibited by GLUL/glutamine synthase (GS) which affects the gating at the aperture in the absence of intracellular glutamate. Inhibitory effect of GLUL is relieved upon increasing of intracellular level of L-glutamate. In terms of biological role, ligand-gated anion channel that allows the movement of anions across cell membranes when activated by calcium (Ca2+). Transports a large specter of anions, namely mediates the movement of chloride, L-glutamate and iodide. Calcium-binding triggers the dilation of the aperture, but calcium-dependent gating is only effective when the size of the passing anion is bigger than the closed aperture. Mediates the calcium-activated hydrogencarbonate movement and participates in colonic hydrogencarbonate secretion concomitant with mucin secretion. In non-pigmented epithelium (NPE), mediates the efflux of intracellular L-glutamate; binding of intracellular L-glutamate activates and open both the neck and the aperture of the channel, leading to L-glutamate exit promoting chloride influx movement from the extracellular side in trans. Also exhibits a directional permeability for intracellular glutamine, in a similar manner as for L-glutamate. This Mus musculus (Mouse) protein is Bestrophin-2.